Reading from the N-terminus, the 1572-residue chain is Helicase SWR1 (1572 aa).

Disordered stretches follow at residues 61-94 (SLEQ…DKNN), 119-291 (CGRR…SLNT), and 304-323 (TSSS…QKKS). Composition is skewed to polar residues over residues 82-94 (ISGT…DKNN) and 152-173 (TVVT…SSPK). The span at 179 to 192 (TADKKSKLNKRDSS) shows a compositional bias: basic and acidic residues. The segment covering 216–232 (SKARLKSSKAKSKKRAV) has biased composition (basic residues). A compositionally biased stretch (basic and acidic residues) spans 238–269 (LVRKQSPEIKNESKRTKADPTHTNDDGNDNRK). Over residues 282 to 291 (ESGLKTSLNT) the composition is skewed to polar residues. Residues 424-496 (ISVYYKEQSK…EEKRKKNLAR (73 aa)) enclose the HSA domain. 3 disordered regions span residues 555–604 (TYPS…GNDM), 624–675 (FGNE…PGLS), and 694–749 (FDAD…AADP). A compositionally biased stretch (low complexity) spans 558-568 (SEASDASSEFS). Residues 569–583 (ANEESDGNSDIDDEM) show a composition bias toward acidic residues. Over residues 590-602 (DSDKEGNTERIGN) the composition is skewed to basic and acidic residues. The segment covering 643-657 (DSVSDSMEDSLSSSE) has biased composition (low complexity). Positions 694-705 (FDADSSSDDGLD) are enriched in acidic residues. Residues 726 to 737 (SDNELKDEKAET) are compositionally biased toward basic and acidic residues. Residues 777–942 (ASLYNNKTNG…WSLLYFLMPQ (166 aa)) form the Helicase ATP-binding domain. 790–797 (DEMGLGKT) lines the ATP pocket. The DEAH box signature appears at 893–896 (DEAH). In terms of domain architecture, Helicase C-terminal spans 1314-1464 (KLAQLLQNLK…NVVIQTGDFT (151 aa)). The segment at 1505 to 1556 (AEDEDDAKAAKSALREVNVDNEDFQEGSVAAQDGNSDNENNEDSEDEYGGTS) is disordered. Residues 1511 to 1522 (AKAAKSALREVN) are compositionally biased toward basic and acidic residues. Positions 1543–1552 (ENNEDSEDEY) are enriched in acidic residues.

The protein belongs to the SNF2/RAD54 helicase family. SWR1 subfamily. Component of the SWR1 chromatin-remodeling complex.

The protein localises to the nucleus. It carries out the reaction ATP + H2O = ADP + phosphate + H(+). In terms of biological role, catalytic component of the SWR1 complex which mediates the ATP-dependent exchange of histone H2A for the H2A variant HZT1 leading to transcriptional regulation of selected genes by chromatin remodeling. In Kluyveromyces lactis (strain ATCC 8585 / CBS 2359 / DSM 70799 / NBRC 1267 / NRRL Y-1140 / WM37) (Yeast), this protein is Helicase SWR1 (SWR1).